We begin with the raw amino-acid sequence, 283 residues long: Bifunctional protein FolD (283 aa).

Residues 165-167, Ser-190, and Thr-231 contribute to the NADP(+) site; that span reads GRS.

The protein belongs to the tetrahydrofolate dehydrogenase/cyclohydrolase family. Homodimer.

The enzyme catalyses (6R)-5,10-methylene-5,6,7,8-tetrahydrofolate + NADP(+) = (6R)-5,10-methenyltetrahydrofolate + NADPH. It carries out the reaction (6R)-5,10-methenyltetrahydrofolate + H2O = (6R)-10-formyltetrahydrofolate + H(+). The protein operates within one-carbon metabolism; tetrahydrofolate interconversion. In terms of biological role, catalyzes the oxidation of 5,10-methylenetetrahydrofolate to 5,10-methenyltetrahydrofolate and then the hydrolysis of 5,10-methenyltetrahydrofolate to 10-formyltetrahydrofolate. The protein is Bifunctional protein FolD of Nocardia farcinica (strain IFM 10152).